A 156-amino-acid polypeptide reads, in one-letter code: Small ribosomal subunit protein uS7 (156 aa).

Belongs to the universal ribosomal protein uS7 family. In terms of assembly, part of the 30S ribosomal subunit. Contacts proteins S9 and S11.

One of the primary rRNA binding proteins, it binds directly to 16S rRNA where it nucleates assembly of the head domain of the 30S subunit. Is located at the subunit interface close to the decoding center, probably blocks exit of the E-site tRNA. In Campylobacter curvus (strain 525.92), this protein is Small ribosomal subunit protein uS7.